The primary structure comprises 246 residues: tRNA (guanine-N(1)-)-methyltransferase (246 aa).

Residues Gly-113 and 133–138 (IGDYVL) each bind S-adenosyl-L-methionine.

This sequence belongs to the RNA methyltransferase TrmD family. As to quaternary structure, homodimer.

The protein resides in the cytoplasm. The catalysed reaction is guanosine(37) in tRNA + S-adenosyl-L-methionine = N(1)-methylguanosine(37) in tRNA + S-adenosyl-L-homocysteine + H(+). Specifically methylates guanosine-37 in various tRNAs. The polypeptide is tRNA (guanine-N(1)-)-methyltransferase (Yersinia pseudotuberculosis serotype O:1b (strain IP 31758)).